We begin with the raw amino-acid sequence, 284 residues long: Diaminopimelate epimerase (284 aa).

Residues Asn20, Gln53, and Asn73 each coordinate substrate. Cys82 acts as the Proton donor in catalysis. Residues Gly83–Asn84, Asn167, Asn200, and Glu218–Arg219 contribute to the substrate site. Residue Cys227 is the Proton acceptor of the active site. Gly228–Ser229 provides a ligand contact to substrate.

Belongs to the diaminopimelate epimerase family. As to quaternary structure, homodimer.

It localises to the cytoplasm. The enzyme catalyses (2S,6S)-2,6-diaminopimelate = meso-2,6-diaminopimelate. It functions in the pathway amino-acid biosynthesis; L-lysine biosynthesis via DAP pathway; DL-2,6-diaminopimelate from LL-2,6-diaminopimelate: step 1/1. Functionally, catalyzes the stereoinversion of LL-2,6-diaminopimelate (L,L-DAP) to meso-diaminopimelate (meso-DAP), a precursor of L-lysine and an essential component of the bacterial peptidoglycan. This is Diaminopimelate epimerase from Xanthomonas campestris pv. campestris (strain ATCC 33913 / DSM 3586 / NCPPB 528 / LMG 568 / P 25).